The primary structure comprises 472 residues: Cysteine--tRNA ligase (472 aa).

Cys28 lines the Zn(2+) pocket. A 'HIGH' region motif is present at residues 30-40 (PTVYNYIHIGN). Residues Cys212, His237, and Glu241 each contribute to the Zn(2+) site. Positions 271-275 (KMSKS) match the 'KMSKS' region motif. Lys274 contributes to the ATP binding site.

Belongs to the class-I aminoacyl-tRNA synthetase family. Monomer. It depends on Zn(2+) as a cofactor.

The protein localises to the cytoplasm. It carries out the reaction tRNA(Cys) + L-cysteine + ATP = L-cysteinyl-tRNA(Cys) + AMP + diphosphate. The polypeptide is Cysteine--tRNA ligase (Limosilactobacillus fermentum (strain NBRC 3956 / LMG 18251) (Lactobacillus fermentum)).